The following is a 64-amino-acid chain: Sec-independent protein translocase protein TatA (64 aa).

The helical transmembrane segment at 10–30 (LVLILGIALIIFGPGKLPELG) threads the bilayer.

This sequence belongs to the TatA/E family. Forms a complex with TatC.

It localises to the cell membrane. Part of the twin-arginine translocation (Tat) system that transports large folded proteins containing a characteristic twin-arginine motif in their signal peptide across membranes. TatA could form the protein-conducting channel of the Tat system. In Alkaliphilus oremlandii (strain OhILAs) (Clostridium oremlandii (strain OhILAs)), this protein is Sec-independent protein translocase protein TatA.